Consider the following 332-residue polypeptide: Glycerol-3-phosphate dehydrogenase [NAD(P)+] (332 aa).

Trp-13, Lys-34, and Lys-108 together coordinate NADPH. Residues Lys-108, Gly-136, and Ser-138 each coordinate sn-glycerol 3-phosphate. An NADPH-binding site is contributed by Ala-140. Positions 191, 244, 254, 255, and 256 each coordinate sn-glycerol 3-phosphate. The Proton acceptor role is filled by Lys-191. NADPH is bound at residue Arg-255. Residues Val-279 and Glu-281 each coordinate NADPH.

This sequence belongs to the NAD-dependent glycerol-3-phosphate dehydrogenase family.

The protein resides in the cytoplasm. The enzyme catalyses sn-glycerol 3-phosphate + NAD(+) = dihydroxyacetone phosphate + NADH + H(+). It carries out the reaction sn-glycerol 3-phosphate + NADP(+) = dihydroxyacetone phosphate + NADPH + H(+). It participates in membrane lipid metabolism; glycerophospholipid metabolism. Catalyzes the reduction of the glycolytic intermediate dihydroxyacetone phosphate (DHAP) to sn-glycerol 3-phosphate (G3P), the key precursor for phospholipid synthesis. The protein is Glycerol-3-phosphate dehydrogenase [NAD(P)+] of Francisella philomiragia subsp. philomiragia (strain ATCC 25017 / CCUG 19701 / FSC 153 / O#319-036).